A 475-amino-acid chain; its full sequence is Ribulose bisphosphate carboxylase large chain (475 aa).

The propeptide occupies Met1–Ser2. Residue Pro3 is modified to N-acetylproline. An N6,N6,N6-trimethyllysine modification is found at Lys14. Positions 123 and 173 each coordinate substrate. Lys175 serves as the catalytic Proton acceptor. Lys177 contacts substrate. Mg(2+) is bound by residues Lys201, Asp203, and Glu204. N6-carboxylysine is present on Lys201. His294 functions as the Proton acceptor in the catalytic mechanism. Residues Arg295, His327, and Ser379 each contribute to the substrate site.

This sequence belongs to the RuBisCO large chain family. Type I subfamily. Heterohexadecamer of 8 large chains and 8 small chains; disulfide-linked. The disulfide link is formed within the large subunit homodimers. Mg(2+) serves as cofactor. Post-translationally, the disulfide bond which can form in the large chain dimeric partners within the hexadecamer appears to be associated with oxidative stress and protein turnover.

It localises to the plastid. The protein localises to the chloroplast. The catalysed reaction is 2 (2R)-3-phosphoglycerate + 2 H(+) = D-ribulose 1,5-bisphosphate + CO2 + H2O. It catalyses the reaction D-ribulose 1,5-bisphosphate + O2 = 2-phosphoglycolate + (2R)-3-phosphoglycerate + 2 H(+). Functionally, ruBisCO catalyzes two reactions: the carboxylation of D-ribulose 1,5-bisphosphate, the primary event in carbon dioxide fixation, as well as the oxidative fragmentation of the pentose substrate in the photorespiration process. Both reactions occur simultaneously and in competition at the same active site. The sequence is that of Ribulose bisphosphate carboxylase large chain from Pseudolarix amabilis (Golden larch).